The following is a 389-amino-acid chain: Succinate--CoA ligase [ADP-forming] subunit beta (389 aa).

Residues 9 to 244 (KELLRQFNVP…IDEEDAAEIE (236 aa)) enclose the ATP-grasp domain. Residues K46, 53–55 (GRG), E99, A102, and E107 contribute to the ATP site. Mg(2+) is bound by residues N199 and D213. Residues N264 and 321–323 (GIM) each bind substrate.

It belongs to the succinate/malate CoA ligase beta subunit family. As to quaternary structure, heterotetramer of two alpha and two beta subunits. Mg(2+) is required as a cofactor.

The enzyme catalyses succinate + ATP + CoA = succinyl-CoA + ADP + phosphate. It carries out the reaction GTP + succinate + CoA = succinyl-CoA + GDP + phosphate. The protein operates within carbohydrate metabolism; tricarboxylic acid cycle; succinate from succinyl-CoA (ligase route): step 1/1. Its function is as follows. Succinyl-CoA synthetase functions in the citric acid cycle (TCA), coupling the hydrolysis of succinyl-CoA to the synthesis of either ATP or GTP and thus represents the only step of substrate-level phosphorylation in the TCA. The beta subunit provides nucleotide specificity of the enzyme and binds the substrate succinate, while the binding sites for coenzyme A and phosphate are found in the alpha subunit. The sequence is that of Succinate--CoA ligase [ADP-forming] subunit beta from Polynucleobacter asymbioticus (strain DSM 18221 / CIP 109841 / QLW-P1DMWA-1) (Polynucleobacter necessarius subsp. asymbioticus).